An 804-amino-acid polypeptide reads, in one-letter code: Leucine--tRNA ligase (804 aa).

A 'HIGH' region motif is present at residues proline 39–histidine 50. Positions lysine 580–serine 584 match the 'KMSKS' region motif. Residue lysine 583 coordinates ATP.

The protein belongs to the class-I aminoacyl-tRNA synthetase family.

It is found in the cytoplasm. The catalysed reaction is tRNA(Leu) + L-leucine + ATP = L-leucyl-tRNA(Leu) + AMP + diphosphate. In Mycoplasma mycoides subsp. mycoides SC (strain CCUG 32753 / NCTC 10114 / PG1), this protein is Leucine--tRNA ligase.